Here is a 207-residue protein sequence, read N- to C-terminus: Negative modulator of initiation of replication (207 aa).

Positions 43-54 (ATPITSSVTPSA) are enriched in polar residues. Residues 43–63 (ATPITSSVTPSAPRQEAVNDE) form a disordered region.

It belongs to the SeqA family. Homodimer. Polymerizes to form helical filaments.

It localises to the cytoplasm. Its function is as follows. Negative regulator of replication initiation, which contributes to regulation of DNA replication and ensures that replication initiation occurs exactly once per chromosome per cell cycle. Binds to pairs of hemimethylated GATC sequences in the oriC region, thus preventing assembly of replication proteins and re-initiation at newly replicated origins. Repression is relieved when the region becomes fully methylated. This chain is Negative modulator of initiation of replication, found in Psychromonas ingrahamii (strain DSM 17664 / CCUG 51855 / 37).